A 148-amino-acid polypeptide reads, in one-letter code: Probable transporter PD_1893 (148 aa).

A run of 4 helical transmembrane segments spans residues 11–31, 48–68, 93–113, and 118–138; these read FTVALAAGLLFGFGLALSEMI, NPSLLFVLGSALAVAFPGMAL, IVFGSAIFGTGWGLTGLCPGP, and LSTGLGSVLLFVAAMAAGMII.

The protein belongs to the TsuA/YedE (TC 9.B.102) family.

The protein resides in the cell inner membrane. The chain is Probable transporter PD_1893 from Xylella fastidiosa (strain Temecula1 / ATCC 700964).